A 417-amino-acid polypeptide reads, in one-letter code: Gamma-glutamyl phosphate reductase (417 aa).

This sequence belongs to the gamma-glutamyl phosphate reductase family.

It localises to the cytoplasm. The enzyme catalyses L-glutamate 5-semialdehyde + phosphate + NADP(+) = L-glutamyl 5-phosphate + NADPH + H(+). It functions in the pathway amino-acid biosynthesis; L-proline biosynthesis; L-glutamate 5-semialdehyde from L-glutamate: step 2/2. In terms of biological role, catalyzes the NADPH-dependent reduction of L-glutamate 5-phosphate into L-glutamate 5-semialdehyde and phosphate. The product spontaneously undergoes cyclization to form 1-pyrroline-5-carboxylate. The chain is Gamma-glutamyl phosphate reductase from Legionella pneumophila subsp. pneumophila (strain Philadelphia 1 / ATCC 33152 / DSM 7513).